A 182-amino-acid chain; its full sequence is MVKALLVGSKVLVPSIDESRYLYSNGFYGKPIGISKPKGPKDIVRPLELSLIESVYLTKKGLINVVDKNGDLLEYKKLYEYSAMKINKFEILYKVYEDLREKGFIVRSGVKYGADFAVYTLGPGLEHAPYVVIAVDIDEEITPHELLSFGRVSHSTKKRLVLALVDRKSEGIRYIMFKWVKM.

Residues Y119, H127, and K158 contribute to the active site.

Belongs to the tRNA-intron endonuclease family. Archaeal short subfamily. In terms of assembly, homotetramer; although the tetramer contains four active sites, only two participate in the cleavage. Therefore, it should be considered as a dimer of dimers.

It carries out the reaction pretRNA = a 3'-half-tRNA molecule with a 5'-OH end + a 5'-half-tRNA molecule with a 2',3'-cyclic phosphate end + an intron with a 2',3'-cyclic phosphate and a 5'-hydroxyl terminus.. In terms of biological role, endonuclease that removes tRNA introns. Cleaves pre-tRNA at the 5'- and 3'-splice sites to release the intron. The products are an intron and two tRNA half-molecules bearing 2',3' cyclic phosphate and 5'-OH termini. Recognizes a pseudosymmetric substrate in which 2 bulged loops of 3 bases are separated by a stem of 4 bp. The sequence is that of tRNA-splicing endonuclease from Saccharolobus solfataricus (strain ATCC 35092 / DSM 1617 / JCM 11322 / P2) (Sulfolobus solfataricus).